The following is a 300-amino-acid chain: Heme A synthase (300 aa).

Residues 1 to 8 (MLKEKNLK) are Cytoplasmic-facing. The chain crosses the membrane as a helical span at residues 9–29 (WLSLFTTVLMLFVQIGGALVT). Residues 30–64 (KTGSADGCGSSWPLCHGKFVPTHIPKETLIELAHR) lie on the Extracellular side of the membrane. Residues C37 and C44 are joined by a disulfide bond. E60 is a catalytic residue. H63 is a heme o binding site. Residues 65–85 (GVSGLALLSVTWLVILSIKYI) traverse the membrane as a helical segment. The Cytoplasmic portion of the chain corresponds to 86-92 (GHKKETK). Residues 93–113 (FLCYMSIGFIFAQALIGAAAV) traverse the membrane as a helical segment. At 114 to 123 (MWQQNGFVLA) the chain is on the extracellular side. The chain crosses the membrane as a helical span at residues 124–144 (LHFGISLISFSAVFLLTLLIF). H125 contacts heme o. The Cytoplasmic segment spans residues 145-163 (EVDQKFDATKLILQPKLRR). A helical membrane pass occupies residues 164 to 184 (HTIGLTSFIYFVIYSGALVRH). Over 185–218 (EKASLACSSWPLCRKGAFILPQNFYEWVQMSHRT) the chain is Extracellular. C191 and C197 form a disulfide bridge. H216 lines the heme b pocket. The helical transmembrane segment at 219–239 (LAFILFIWLTYVAFHAMRNYA) threads the bilayer. At 240-249 (QYRVIKYGYM) the chain is on the cytoplasmic side. A helical transmembrane segment spans residues 250 to 270 (IAFILICLQVTTGALTIFTAV). Over 271–275 (NLYIA) the chain is Extracellular. Residues 276–296 (LLHALFITLLFGLLCYFILLI) form a helical membrane-spanning segment. H278 contributes to the heme b binding site. Topologically, residues 297–300 (SRAK) are cytoplasmic.

This sequence belongs to the COX15/CtaA family. Type 1 subfamily. As to quaternary structure, interacts with CtaB. Heme b is required as a cofactor.

It localises to the cell membrane. The catalysed reaction is Fe(II)-heme o + 2 A + H2O = Fe(II)-heme a + 2 AH2. It participates in porphyrin-containing compound metabolism; heme A biosynthesis; heme A from heme O: step 1/1. In terms of biological role, catalyzes the conversion of heme O to heme A by two successive hydroxylations of the methyl group at C8. The first hydroxylation forms heme I, the second hydroxylation results in an unstable dihydroxymethyl group, which spontaneously dehydrates, resulting in the formyl group of heme A. The polypeptide is Heme A synthase (Macrococcus caseolyticus (strain JCSC5402) (Macrococcoides caseolyticum)).